The following is a 327-amino-acid chain: Putative HTH-type transcriptional regulatory protein MM_0444 (327 aa).

Residues 132–190 (LKKARTTQSMSLGTLASMVGVSRRTISKYEEEGMDASIDVVLHLEDIFGVELAKPIDIL) enclose the HTH cro/C1-type domain. Residues 143–162 (LGTLASMVGVSRRTISKYEE) constitute a DNA-binding region (H-T-H motif). Residues 195-214 (SRKPRKKAEPEKEEPKGKPG) are disordered. Basic and acidic residues predominate over residues 201–211 (KAEPEKEEPKG).

The sequence is that of Putative HTH-type transcriptional regulatory protein MM_0444 from Methanosarcina mazei (strain ATCC BAA-159 / DSM 3647 / Goe1 / Go1 / JCM 11833 / OCM 88) (Methanosarcina frisia).